The primary structure comprises 406 residues: Phosphatidylinositol 5-phosphate 4-kinase type-2 alpha (406 aa).

Alanine 2 carries the N-acetylalanine modification. Threonine 3 bears the Phosphothreonine mark. A Phosphoserine modification is found at serine 14. The region spanning 33-405 (ASDPLLSVLM…RFLDFIGHIL (373 aa)) is the PIPK domain. A required for interaction with PIP5K1A region spans residues 59-65 (VMLMPDD). An N6-acetyllysine mark is found at lysine 89 and lysine 145. The tract at residues 287 to 328 (EQEEVECEENEGEEEGESDGAHPIGTPPDSPGNTLNSSPPLA) is disordered. Residues 289-304 (EEVECEENEGEEEGES) show a composition bias toward acidic residues.

As to quaternary structure, homodimer. Interacts with PIP4K2B; the interaction may regulate localization to the nucleus. Probably interacts with PIP5K1A; the interaction inhibits PIP5K1A kinase activity. Post-translationally, phosphorylated in tyrosines. Phosphorylation is induced by light and increases kinase activity.

The protein resides in the cell membrane. It is found in the nucleus. Its subcellular location is the lysosome. It localises to the cytoplasm. The protein localises to the photoreceptor inner segment. The protein resides in the cell projection. It is found in the cilium. Its subcellular location is the photoreceptor outer segment. It carries out the reaction a 1,2-diacyl-sn-glycero-3-phospho-(1D-myo-inositol-5-phosphate) + ATP = a 1,2-diacyl-sn-glycero-3-phospho-(1D-myo-inositol-4,5-bisphosphate) + ADP + H(+). It catalyses the reaction 1,2-dihexadecanoyl-sn-glycero-3-phospho-(1D-myo-inositol-5-phosphate) + ATP = 1,2-dihexadecanoyl-sn-glycero-3-phospho-(1D-myo-inositol-4,5-bisphosphate) + ADP + H(+). The catalysed reaction is 1,2-dihexadecanoyl-sn-glycero-3-phospho-(1D-myo-inositol-5-phosphate) + GTP = 1,2-dihexadecanoyl-sn-glycero-3-phospho-(1D-myo-inositol-4,5-bisphosphate) + GDP + H(+). With respect to regulation, in rod outer segments, activated by light. Its function is as follows. Catalyzes the phosphorylation of phosphatidylinositol 5-phosphate (PtdIns5P) on the fourth hydroxyl of the myo-inositol ring, to form phosphatidylinositol 4,5-bisphosphate (PtdIns(4,5)P2). Has both ATP- and GTP-dependent kinase activities. May exert its function by regulating the levels of PtdIns5P, which functions in the cytosol by increasing AKT activity and in the nucleus signals through ING2. May regulate the pool of cytosolic PtdIns5P in response to the activation of tyrosine phosphorylation. Required for lysosome-peroxisome membrane contacts and intracellular cholesterol transport through modulating peroxisomal PtdIns(4,5)P2 level. In collaboration with PIP4K2B, has a role in mediating autophagy in times of nutrient stress. Required for autophagosome-lysosome fusion and the regulation of cellular lipid metabolism. Negatively regulates insulin signaling through a catalytic-independent mechanism. PIP4Ks interact with PIP5Ks and suppress PIP5K-mediated PtdIns(4,5)P2 synthesis and insulin-dependent conversion to PtdIns(3,4,5)P3. May be involved in thrombopoiesis, and the terminal maturation of megakaryocytes and regulation of their size. This is Phosphatidylinositol 5-phosphate 4-kinase type-2 alpha from Rattus norvegicus (Rat).